Here is a 251-residue protein sequence, read N- to C-terminus: Methionine aminopeptidase (251 aa).

A substrate-binding site is contributed by His76. A divalent metal cation is bound by residues Asp93, Asp104, and His168. His175 contributes to the substrate binding site. A divalent metal cation is bound by residues Glu202 and Glu233.

The protein belongs to the peptidase M24A family. Methionine aminopeptidase type 1 subfamily. As to quaternary structure, monomer. Requires Co(2+) as cofactor. Zn(2+) is required as a cofactor. It depends on Mn(2+) as a cofactor. Fe(2+) serves as cofactor.

The catalysed reaction is Release of N-terminal amino acids, preferentially methionine, from peptides and arylamides.. Functionally, removes the N-terminal methionine from nascent proteins. The N-terminal methionine is often cleaved when the second residue in the primary sequence is small and uncharged (Met-Ala-, Cys, Gly, Pro, Ser, Thr, or Val). Requires deformylation of the N(alpha)-formylated initiator methionine before it can be hydrolyzed. The protein is Methionine aminopeptidase of Staphylococcus epidermidis (strain ATCC 35984 / DSM 28319 / BCRC 17069 / CCUG 31568 / BM 3577 / RP62A).